Here is a 296-residue protein sequence, read N- to C-terminus: Adrenocorticotropic hormone receptor (296 aa).

The Extracellular segment spans residues 1-23 (MKHIINSYEHTNDTARNNSDCPD). N-linked (GlcNAc...) asparagine glycosylation is found at Asn12 and Asn17. 2 disulfide bridges follow: Cys21/Cys253 and Cys245/Cys251. The helical transmembrane segment at 24-49 (VVLPEEIFFTISVIGILENLIVLLAV) threads the bilayer. Topologically, residues 50-58 (IKNKNLQSP) are cytoplasmic. The chain crosses the membrane as a helical span at residues 59–79 (MYFFICSLAISDMLGSLYKIL). The Extracellular segment spans residues 80–104 (ENILIMFRNMGYLKPRGSFESTADD). A helical membrane pass occupies residues 105 to 126 (IIDCMFILSLLGSIFSLSVIAA). The Cytoplasmic portion of the chain corresponds to 127–147 (DRYITIFHALQYHSIVTMRRT). The helical transmembrane segment at 148–168 (IITLTIIWMFCTGSGITMVIF) threads the bilayer. Over 169–180 (SHHIPTVLTFTS) the chain is Extracellular. A helical transmembrane segment spans residues 181-199 (LFPLMLVFILCLYIHMFLL). At 200–217 (ARSHARKISTLPRTNMKG) the chain is on the cytoplasmic side. Residues 218–244 (AMTLTILLGVFIFCWAPFVLHVLLMTF) form a helical membrane-spanning segment. Residues 245–256 (CPNNPYCVCYMS) lie on the Extracellular side of the membrane. The helical transmembrane segment at 257–278 (LFQVNGMLIMCNAVIDPFIYAF) threads the bilayer. The Cytoplasmic segment spans residues 279 to 296 (RSPELRDAFKRMLFCNRY). A lipid anchor (S-palmitoyl cysteine) is attached at Cys293.

Belongs to the G-protein coupled receptor 1 family. As to quaternary structure, homodimer. Interacts with corticotropin (ACTH). Interacts with MRAP; this interaction targets MC2R to the plasma membrane. Interacts with MRAP2; competing with MRAP for binding to MC2R and impairing the binding of corticotropin (ACTH). Post-translationally, ubiquitinated by MGRN1 that may be involved in post-endocytic trafficking and/or degradation of internalized receptor.

It localises to the cell membrane. In terms of biological role, hormone receptor primarily expressed in adrenal cortex that plays a key role in regulating adrenocortical function. Upon corticotropin (ACTH) binding, facilitates the release of adrenal glucocorticoids, including cortisol and corticosterone. In addition, MC2R is required for fetal and neonatal adrenal gland development. Mechanistically, activates adenylate cyclase (cAMP), the MAPK cascade as well as the cAMP-dependent protein kinase A pathway leading to steroidogenic factor 1/NR5A1-mediated transcriptional activation. In Mus musculus (Mouse), this protein is Adrenocorticotropic hormone receptor (Mc2r).